We begin with the raw amino-acid sequence, 559 residues long: Nucleoprotein (559 aa).

A binding site for the cap structure m7GTP region spans residues 53–235 (MRKEKRTDSD…ITQEQSQINI (183 aa)). Mn(2+)-binding residues include aspartate 378 and glutamate 380. Positions 388, 495, 498, and 519 each coordinate Zn(2+). Residue aspartate 523 coordinates Mn(2+).

This sequence belongs to the arenaviridae nucleocapsid protein family. As to quaternary structure, homomultimerizes to form the nucleocapsid. Binds to viral genomic RNA. Interacts with glycoprotein G2. Interacts with protein Z; this interaction probably directs the encapsidated genome to budding sites. Interacts with protein L; this interaction does not interfere with Z-L interaction. Interacts with host IKBKE (via Protein kinase domain); the interaction inhibits IKBKE kinase activity.

It localises to the virion. The protein localises to the host cytoplasm. Functionally, encapsidates the genome, protecting it from nucleases. The encapsidated genomic RNA is termed the nucleocapsid (NC). Serves as template for viral transcription and replication. The increased presence of protein N in host cell does not seem to trigger the switch from transcription to replication as observed in other negative strain RNA viruses. Through the interaction with host IKBKE, strongly inhibits the phosphorylation and nuclear translocation of host IRF3, a protein involved in interferon activation pathway, leading to the inhibition of interferon-beta and IRF3-dependent promoters activation. Also encodes a functional 3'-5' exoribonuclease that degrades preferentially dsRNA substrates and thereby participates in the suppression of interferon induction. The protein is Nucleoprotein of Sooretamys angouya (Paraguayan rice rat).